Here is a 374-residue protein sequence, read N- to C-terminus: MLVARERKYCSVCHQLGDGYHFGAIACKACAAFFRRTTSMNLAPKFVCRKKNECVIKMSSRDSCKSCRYAKCLHVGMNPEVVQAIQQAAKQANSPGIESLPSCSSSPASCNSPILSLELGDYDQMTPTLCGVMESYQKLYKKRYDLHAPKLTPRATNYGEFCKIYSNDVYLQFEFLEGSFPQFKEMGGFEKKHVFKYFFVSFLILEMGYRSYQEGTDAIVLANGDFIDTMNLDEFYYDPESLEKCKPTDAMKMYRPNFDQMKRNVFQPLSHQKLSLIEFLALVSLCTWNESLDGQPDCYYPSCRPVRQSVIADLKAFYEKDSPDVDPAYRLSGLLMLLPALERSVELFLQTMEVKRLFRCFPFHDKIYKIIDGQ.

The segment at residues 7–84 is a DNA-binding region (nuclear receptor); it reads RKYCSVCHQL…VGMNPEVVQA (78 aa). 2 consecutive NR C4-type zinc fingers follow at residues 10-30 and 48-67; these read CSVCHQLGDGYHFGAIACKAC and CRKKNECVIKMSSRDSCKSC. One can recognise an NR LBD domain in the interval 124–374; the sequence is QMTPTLCGVM…DKIYKIIDGQ (251 aa).

Belongs to the nuclear hormone receptor family.

Its subcellular location is the nucleus. Orphan nuclear receptor. The sequence is that of Nuclear hormone receptor family member nhr-57 (nhr-57) from Caenorhabditis elegans.